Consider the following 276-residue polypeptide: Glutamate 5-kinase (276 aa).

Lys14 is an ATP binding site. Ser54, Asp141, and Asn157 together coordinate substrate. ATP is bound by residues 177 to 178 (SD) and 219 to 225 (TGGMLTK).

This sequence belongs to the glutamate 5-kinase family.

The protein resides in the cytoplasm. It catalyses the reaction L-glutamate + ATP = L-glutamyl 5-phosphate + ADP. It functions in the pathway amino-acid biosynthesis; L-proline biosynthesis; L-glutamate 5-semialdehyde from L-glutamate: step 1/2. Its function is as follows. Catalyzes the transfer of a phosphate group to glutamate to form L-glutamate 5-phosphate. This is Glutamate 5-kinase from Listeria monocytogenes serotype 4a (strain HCC23).